The primary structure comprises 505 residues: Glutamate--tRNA ligase (505 aa).

Positions 12 to 22 (PSPTGDPHVGT) match the 'HIGH' region motif. The 'KMSKS' region signature appears at 253–257 (KLSKR). Residue lysine 256 coordinates ATP.

This sequence belongs to the class-I aminoacyl-tRNA synthetase family. Glutamate--tRNA ligase type 1 subfamily. Monomer.

Its subcellular location is the cytoplasm. It catalyses the reaction tRNA(Glu) + L-glutamate + ATP = L-glutamyl-tRNA(Glu) + AMP + diphosphate. Its function is as follows. Catalyzes the attachment of glutamate to tRNA(Glu) in a two-step reaction: glutamate is first activated by ATP to form Glu-AMP and then transferred to the acceptor end of tRNA(Glu). This is Glutamate--tRNA ligase from Chlamydophila psittaci (strain ATCC VR-125 / 6BC) (Chlamydia psittaci).